A 381-amino-acid chain; its full sequence is MRSSLCWLLTLLLILATAAQGQPTRRPRPRPRPRPRPRLRPTPSFPQPDEPTEPTDLPPPLPPGPPSVFPDCPRECYCPPDFPSALYCDSRNLRKVPVIPSRIHYLYLQNNFITELPVESFKNATGLRWINLDNNRIRKVDQRVLEKLPSLVFLYLEKNQLEEVPAALPRNLEQLRLSQNQISRIPPGVFSKLENLLLLDLQHNKLSDGVFKPDTFQGLKNLMQLNLAHNTLRKMPPKVPSAIHQLYLDSNRIEAIPSGYFKGFPNLAFIRLNYNQLSDRGLPKNSFNISNLLVLHLSHNRISSVPAISSRLEHLYLNNNSIEKINGTQICPNNIVAFHDFSSDLEHVPHLRYLRLDGNYLKPPIPLDLMMCFRLLQSVVI.

The N-terminal stretch at 1 to 21 is a signal peptide; sequence MRSSLCWLLTLLLILATAAQG. The interval 19 to 65 is disordered; it reads AQGQPTRRPRPRPRPRPRPRLRPTPSFPQPDEPTEPTDLPPPLPPGP. The segment covering 25-39 has biased composition (basic residues); it reads RRPRPRPRPRPRPRL. A compositionally biased stretch (pro residues) spans 56–65; that stretch reads DLPPPLPPGP. LRR repeat units follow at residues 94–113, 114–137, 138–161, 162–182, 183–206, 207–232, 233–253, 254–277, 278–302, 303–322, 323–361, and 362–381; these read RKVPVIPSRIHYLYLQNNFI, TELPVESFKNATGLRWINLDNNRI, RKVDQRVLEKLPSLVFLYLEKNQL, EEVPAALPRNLEQLRLSQNQI, SRIPPGVFSKLENLLLLDLQHNKL, SDGVFKPDTFQGLKNLMQLNLAHNTL, RKMPPKVPSAIHQLYLDSNRI, EAIPSGYFKGFPNLAFIRLNYNQL, SDRGLPKNSFNISNLLVLHLSHNRI, SSVPAISSRLEHLYLNNNSI, EKINGTQICPNNIVAFHDFSSDLEHVPHLRYLRLDGNYL, and KPPIPLDLMMCFRLLQSVVI. Asn-123 is a glycosylation site (N-linked (GlcNAc...) asparagine). N-linked (GlcNAc...) asparagine glycosylation is found at Asn-288, Asn-319, and Asn-326. Cys-331 and Cys-372 are joined by a disulfide.

The protein belongs to the small leucine-rich proteoglycan (SLRP) family. SLRP class II subfamily. Binds the basement membrane heparan sulfate proteoglycan perlecan and triple helical collagens type I and type II. Glycosylated; contains heparan sulfate.

The protein localises to the secreted. The protein resides in the extracellular space. Its subcellular location is the extracellular matrix. Its function is as follows. May anchor basement membranes to the underlying connective tissue. In Bos taurus (Bovine), this protein is Prolargin (PRELP).